Reading from the N-terminus, the 904-residue chain is UPF0182 protein CKL_0015 (904 aa).

7 helical membrane-spanning segments follow: residues 9–29 (SLIV…DFII), 47–67 (LIAI…SIVL), 96–116 (IFII…AATY), 157–177 (ILSL…TLSV), 208–228 (LAVL…LKCI), 253–273 (YKII…SILV), and 279–299 (IIVS…SYTV).

Belongs to the UPF0182 family.

The protein resides in the cell membrane. In Clostridium kluyveri (strain ATCC 8527 / DSM 555 / NBRC 12016 / NCIMB 10680 / K1), this protein is UPF0182 protein CKL_0015.